The chain runs to 602 residues: Myotubularin (602 aa).

The segment at 1-32 (MASNSTPKYNSNSLENSLRRSPGDGMNHEQND) is disordered. The segment covering 17–31 (SLRRSPGDGMNHEQN) has biased composition (basic and acidic residues). In terms of domain architecture, GRAM spans 28-96 (HEQNDEIPCL…GVIARIEKMG (69 aa)). The Myotubularin phosphatase domain occupies 162–537 (GWAVYDAMTE…RHLELWVNYY (376 aa)). 3 residues coordinate a 1,2-diacyl-sn-glycero-3-phospho-(1D-myo-inositol-3,5-bisphosphate): Asn287, Asn312, and Ile313. Asn287, Asn312, and Ile313 together coordinate a 1,2-diacyl-sn-glycero-3-phospho-(1D-myo-inositol-3-phosphate). Cys374 acts as the Phosphocysteine intermediate in catalysis. Positions 375, 376, 377, 378, 379, 380, 416, and 420 each coordinate a 1,2-diacyl-sn-glycero-3-phospho-(1D-myo-inositol-3,5-bisphosphate). The a 1,2-diacyl-sn-glycero-3-phospho-(1D-myo-inositol-3-phosphate) site is built by Ser375, Asp376, Gly377, Trp378, Asp379, and Arg380. Arg420 is an a 1,2-diacyl-sn-glycero-3-phospho-(1D-myo-inositol-3-phosphate) binding site. Residues 574-602 (QITNSPKMNSSTTSPSSPSQIMPQVHTPF) form a disordered region. Over residues 583-592 (SSTTSPSSPS) the composition is skewed to low complexity.

It belongs to the protein-tyrosine phosphatase family. Non-receptor class myotubularin subfamily.

Its subcellular location is the cytoplasm. It is found in the cell membrane. The protein resides in the cell projection. It localises to the filopodium. The protein localises to the ruffle. Its subcellular location is the late endosome. It is found in the myofibril. The protein resides in the sarcomere. It carries out the reaction a 1,2-diacyl-sn-glycero-3-phospho-(1D-myo-inositol-3-phosphate) + H2O = a 1,2-diacyl-sn-glycero-3-phospho-(1D-myo-inositol) + phosphate. It catalyses the reaction a 1,2-diacyl-sn-glycero-3-phospho-(1D-myo-inositol-3,5-bisphosphate) + H2O = a 1,2-diacyl-sn-glycero-3-phospho-(1D-myo-inositol-5-phosphate) + phosphate. The enzyme catalyses 1,2-dioctanoyl-sn-glycero-3-phospho-(1-D-myo-inositol-3-phosphate) + H2O = 1,2-dioctanoyl-sn-glycero-3-phospho-(1D-myo-inositol) + phosphate. The catalysed reaction is 1,2-dioctanoyl-sn-glycero-3-phospho-(1D-myo-inositol-3,5-bisphosphate) + H2O = 1,2-dioctanoyl-sn-glycero-3-phospho-(1D-myo-inositol-5-phosphate) + phosphate. It carries out the reaction 1,2-dihexadecanoyl-sn-glycero-3-phospho-(1D-myo-inositol-3,5-phosphate) + H2O = 1,2-dihexadecanoyl-sn-glycero-3-phospho-(1D-myo-inositol-5-phosphate) + phosphate. Functionally, lipid phosphatase which dephosphorylates phosphatidylinositol 3-monophosphate (PI3P) and phosphatidylinositol 3,5-bisphosphate (PI(3,5)P2). The sequence is that of Myotubularin (mtm1) from Xenopus tropicalis (Western clawed frog).